The primary structure comprises 294 residues: tRNA dimethylallyltransferase (294 aa).

10-17 lines the ATP pocket; the sequence is GPTAVGKT. Substrate is bound at residue 12 to 17; it reads TAVGKT. Positions 35-38 are interaction with substrate tRNA; the sequence is DSQQ.

It belongs to the IPP transferase family. As to quaternary structure, monomer. The cofactor is Mg(2+).

It catalyses the reaction adenosine(37) in tRNA + dimethylallyl diphosphate = N(6)-dimethylallyladenosine(37) in tRNA + diphosphate. Its function is as follows. Catalyzes the transfer of a dimethylallyl group onto the adenine at position 37 in tRNAs that read codons beginning with uridine, leading to the formation of N6-(dimethylallyl)adenosine (i(6)A). The protein is tRNA dimethylallyltransferase of Streptococcus suis (strain 05ZYH33).